A 454-amino-acid polypeptide reads, in one-letter code: Zinc finger CCCH domain-containing protein 66 (454 aa).

Residues 1 to 23 show a composition bias toward gly residues; that stretch reads MAAGAGAGGGGGEGDSNGGGTSP. The disordered stretch occupies residues 1–30; the sequence is MAAGAGAGGGGGEGDSNGGGTSPGGVSAAA. 5 C3H1-type zinc fingers span residues 66–94, 111–139, 157–185, 318–346, and 364–392; these read RIGEPDCSYYMRTGLCRFGMTCKFNHPPN, RVGQPECQYYLKTGTCKFGATCKFHHPRE, RPNEKECAYYLRTGQCKFASTCKFHHPQP, RPDQPECQFYMKTGDCKFGAVCKFHHPKE, and RPGEPVCTFYSRYGICKFGPNCKFDHPMG. The segment at 405–454 is disordered; it reads DVSSMHYQLSPSPGHPGILLDGGSGRSHRVPQSDSQQIPSGDGNAEREAS. Positions 434-443 are enriched in polar residues; the sequence is VPQSDSQQIP.

The chain is Zinc finger CCCH domain-containing protein 66 from Oryza sativa subsp. japonica (Rice).